The sequence spans 377 residues: ATP synthase gamma chain, chloroplastic (377 aa).

The N-terminal 55 residues, 1–55, are a transit peptide targeting the chloroplast; sequence MSCSNLTMLVSSKPSLSDSSALSFRSSVSPFQLPNHNTSGPSNPSRSSSVTPVHC. Residues 30-52 form a disordered region; sequence PFQLPNHNTSGPSNPSRSSSVTP. Residues 37 to 52 are compositionally biased toward low complexity; that stretch reads NTSGPSNPSRSSSVTP. The active site involves Cys-143. Residues Cys-253 and Cys-259 are joined by a disulfide bond.

This sequence belongs to the ATPase gamma chain family. F-type ATPases have 2 components, CF(1) - the catalytic core - and CF(0) - the membrane proton channel. CF(1) has five subunits: alpha(3), beta(3), gamma(1), delta(1), epsilon(1). CF(0) has four main subunits: a, b, b' and c.

Its subcellular location is the plastid. It localises to the chloroplast thylakoid membrane. In terms of biological role, produces ATP from ADP in the presence of a proton gradient across the membrane. The gamma chain is believed to be important in regulating ATPase activity and the flow of protons through the CF(0) complex. This chain is ATP synthase gamma chain, chloroplastic (ATPC), found in Nicotiana tabacum (Common tobacco).